The sequence spans 675 residues: INO80 complex subunit D (675 aa).

Disordered stretches follow at residues 1 to 39 (MNNN…NVNQ), 183 to 203 (TGNN…NSTP), 274 to 324 (LKQK…ERQV), 473 to 523 (DSNK…KLNK), and 627 to 675 (VPVT…TMIS). Composition is skewed to low complexity over residues 282–318 (QQLQ…QLQI), 482–519 (NNDN…NNNN), and 634–648 (NQNN…TNNS). Basic and acidic residues predominate over residues 664-675 (EILKDSDNTMIS).

This sequence belongs to the INO80D family. In terms of assembly, component of the chromatin-remodeling INO80 complex.

It localises to the nucleus. Functionally, putative regulatory component of the chromatin remodeling INO80 complex which is involved in transcriptional regulation, DNA replication and probably DNA repair. The chain is INO80 complex subunit D from Dictyostelium discoideum (Social amoeba).